Reading from the N-terminus, the 359-residue chain is MLENRVKTKQIFIGGVAIGGDAPISTQSMTFSKTADIESTKNQIDRLKLAGADLVRVAVSNEKDALALKELKKVSPLPLIADIHFHYKFALIAAQSVDAIRINPGNIGSKEKIKAVVDACKEKNIPIRIGVNAGSLEKQFDQKYGPTPKGMVESALYNAKLLEDLDFTNFKISLKASDVIRTIEAYRMLRPLVIYPFHLGVTEAGNLFSSSIKSAMALGGLLMEGIGDTMRVSITGELENEIKVARAILRHSGRLKEGINWISCPTCGRIEANLVDMAIKVEKRLSHIKTPLDISVMGCVVNALGEAKHADMAIAFGNRSGLIIKEGKVIHKLAEKDLFETFVIEVENLAKEREKSLKD.

Positions 264, 267, 299, and 306 each coordinate [4Fe-4S] cluster.

This sequence belongs to the IspG family. [4Fe-4S] cluster serves as cofactor.

It catalyses the reaction (2E)-4-hydroxy-3-methylbut-2-enyl diphosphate + oxidized [flavodoxin] + H2O + 2 H(+) = 2-C-methyl-D-erythritol 2,4-cyclic diphosphate + reduced [flavodoxin]. It functions in the pathway isoprenoid biosynthesis; isopentenyl diphosphate biosynthesis via DXP pathway; isopentenyl diphosphate from 1-deoxy-D-xylulose 5-phosphate: step 5/6. Its function is as follows. Converts 2C-methyl-D-erythritol 2,4-cyclodiphosphate (ME-2,4cPP) into 1-hydroxy-2-methyl-2-(E)-butenyl 4-diphosphate. This is 4-hydroxy-3-methylbut-2-en-1-yl diphosphate synthase (flavodoxin) from Helicobacter pylori (strain ATCC 700392 / 26695) (Campylobacter pylori).